Reading from the N-terminus, the 158-residue chain is Cyclic pyranopterin monophosphate synthase (158 aa).

Substrate-binding positions include leucine 75–histidine 77 and methionine 113–glutamate 114. Aspartate 128 is a catalytic residue.

This sequence belongs to the MoaC family. Homohexamer; trimer of dimers.

It catalyses the reaction (8S)-3',8-cyclo-7,8-dihydroguanosine 5'-triphosphate = cyclic pyranopterin phosphate + diphosphate. Its pathway is cofactor biosynthesis; molybdopterin biosynthesis. In terms of biological role, catalyzes the conversion of (8S)-3',8-cyclo-7,8-dihydroguanosine 5'-triphosphate to cyclic pyranopterin monophosphate (cPMP). The protein is Cyclic pyranopterin monophosphate synthase of Azorhizobium caulinodans (strain ATCC 43989 / DSM 5975 / JCM 20966 / LMG 6465 / NBRC 14845 / NCIMB 13405 / ORS 571).